A 707-amino-acid polypeptide reads, in one-letter code: Anti-sigma-I factor RsgI9 (707 aa).

At 1–149 the chain is on the cytoplasmic side; that stretch reads MKITGVIVRI…NFSRISNIKN (149 aa). The RsgI N-terminal anti-sigma domain occupies 3 to 50; it reads ITGVIVRIHKDRAIIRTDDNRLLAVKRHNDMMVGQIVSFDANEVHKVE. A helical membrane pass occupies residues 150–172; that stretch reads FSRIASIAAAFVLIFLFGRNVML. Topologically, residues 173–707 are extracellular; that stretch reads NNSSDSEYAY…DSEEKKEYIQ (535 aa). Positions 256 to 283 form a coiled coil; it reads NDKNKKTRDKREEKIDELKETIEQGIEA. Residues 345–392 form a disordered region; it reads EDNTELAPTPTPVPPETPEPTPTPTASEATPSNSPVESKSPEAVPELG. The segment covering 353 to 367 has biased composition (pro residues); it reads TPTPVPPETPEPTPT. A compositionally biased stretch (low complexity) spans 368 to 379; that stretch reads PTASEATPSNSP.

It localises to the cell membrane. The polypeptide is Anti-sigma-I factor RsgI9 (Acetivibrio thermocellus (strain ATCC 27405 / DSM 1237 / JCM 9322 / NBRC 103400 / NCIMB 10682 / NRRL B-4536 / VPI 7372) (Clostridium thermocellum)).